The sequence spans 356 residues: MSL complex subunit 3B (356 aa).

Positions Glu-2–Pro-350 constitute an MRG domain. 2 disordered regions span residues Thr-135–Asp-210 and Lys-225–Phe-247. A compositionally biased stretch (low complexity) spans Leu-142–Ser-156. Polar residues-rich tracts occupy residues Ala-178 to Thr-189 and His-229 to Gly-243.

Its subcellular location is the nucleus. In terms of biological role, probable non-catalytic component of the MSL histone acetyltransferase complex, a multiprotein complex that mediates the majority of histone H4 acetylation at 'Lys-16' (H4K16ac), an epigenetic mark that prevents chromatin compaction. The sequence is that of MSL complex subunit 3B from Homo sapiens (Human).